A 267-amino-acid polypeptide reads, in one-letter code: Indole-3-glycerol phosphate synthase (267 aa).

It belongs to the TrpC family.

It catalyses the reaction 1-(2-carboxyphenylamino)-1-deoxy-D-ribulose 5-phosphate + H(+) = (1S,2R)-1-C-(indol-3-yl)glycerol 3-phosphate + CO2 + H2O. It functions in the pathway amino-acid biosynthesis; L-tryptophan biosynthesis; L-tryptophan from chorismate: step 4/5. The protein is Indole-3-glycerol phosphate synthase of Cupriavidus taiwanensis (strain DSM 17343 / BCRC 17206 / CCUG 44338 / CIP 107171 / LMG 19424 / R1) (Ralstonia taiwanensis (strain LMG 19424)).